The following is a 266-amino-acid chain: GTP cyclohydrolase FolE2 (266 aa).

The protein belongs to the GTP cyclohydrolase IV family.

The catalysed reaction is GTP + H2O = 7,8-dihydroneopterin 3'-triphosphate + formate + H(+). Its pathway is cofactor biosynthesis; 7,8-dihydroneopterin triphosphate biosynthesis; 7,8-dihydroneopterin triphosphate from GTP: step 1/1. Its function is as follows. Converts GTP to 7,8-dihydroneopterin triphosphate. This is GTP cyclohydrolase FolE2 from Syntrophotalea carbinolica (strain DSM 2380 / NBRC 103641 / GraBd1) (Pelobacter carbinolicus).